We begin with the raw amino-acid sequence, 209 residues long: Peroxynitrite isomerase 2 (209 aa).

The GXWXGXG motif lies at 56 to 62; that stretch reads GVWRGEG. Residues Lys-172 and His-199 each contribute to the heme b site.

Belongs to the nitrobindin family. Homodimer. The cofactor is heme b.

The catalysed reaction is peroxynitrite = nitrate. It participates in nitrogen metabolism. In terms of biological role, heme-binding protein able to scavenge peroxynitrite and to protect free L-tyrosine against peroxynitrite-mediated nitration, by acting as a peroxynitrite isomerase that converts peroxynitrite to nitrate. Therefore, this protein likely plays a role in peroxynitrite sensing and in the detoxification of reactive nitrogen and oxygen species (RNS and ROS, respectively). Is able to bind nitric oxide (NO) in vitro, but may act as a sensor of peroxynitrite levels in vivo. The sequence is that of Peroxynitrite isomerase 2 from Mycolicibacterium gilvum (strain PYR-GCK) (Mycobacterium gilvum (strain PYR-GCK)).